A 198-amino-acid chain; its full sequence is dITP/XTP pyrophosphatase (198 aa).

8–13 (TKNKGK) lines the substrate pocket. Residue Asp69 is the Proton acceptor of the active site. Residue Asp69 coordinates Mg(2+). Substrate contacts are provided by residues Ser70, 152-155 (FGYD), Lys175, and 180-181 (HR).

Belongs to the HAM1 NTPase family. As to quaternary structure, homodimer. Requires Mg(2+) as cofactor.

The enzyme catalyses XTP + H2O = XMP + diphosphate + H(+). It catalyses the reaction dITP + H2O = dIMP + diphosphate + H(+). The catalysed reaction is ITP + H2O = IMP + diphosphate + H(+). Pyrophosphatase that catalyzes the hydrolysis of nucleoside triphosphates to their monophosphate derivatives, with a high preference for the non-canonical purine nucleotides XTP (xanthosine triphosphate), dITP (deoxyinosine triphosphate) and ITP. Seems to function as a house-cleaning enzyme that removes non-canonical purine nucleotides from the nucleotide pool, thus preventing their incorporation into DNA/RNA and avoiding chromosomal lesions. In Shouchella clausii (strain KSM-K16) (Alkalihalobacillus clausii), this protein is dITP/XTP pyrophosphatase.